The chain runs to 279 residues: MRDSVFNCCVSPPHPPGAAAAERRSRSPAPQNHSRFLMFFDFDETLVDECSDDSMVSAAPGGVLPGWLKDTYRPGRYNEYMQRVLAYLSEQGVTPAAIRATVEKLPPCPGIPALMHFLLSQPSRDFEVVCVSDANTVFIETWLQHMGFQPLFLRIFTNPAHFDDNGVLQLRPFHSHECLRCPANMCKAVVVRQYVAQRIRERGGRPYQKVLYMGDGANDFCPSLTLSPGDVAFPRRDFPMHKLIQEMGEAKPGEFKASVVPWKSGEDVVNTLRKILERT.

The active-site Nucleophile is Asp-41. Residues Asp-41 and Asp-43 each contribute to the Mg(2+) site. Asp-43 (proton donor) is an active-site residue. Substrate is bound by residues Asp-52 and Asp-133. Asp-215 provides a ligand contact to Mg(2+).

It belongs to the HAD-like hydrolase superfamily. PHOSPHO family. It depends on Mg(2+) as a cofactor.

It localises to the extracellular vesicle. It catalyses the reaction phosphoethanolamine + H2O = ethanolamine + phosphate. It carries out the reaction phosphocholine + H2O = choline + phosphate. Functionally, phosphatase that has a high activity toward phosphoethanolamine (PEA) and phosphocholine (PCho). Involved in the generation of inorganic phosphate for bone mineralization. The chain is Probable phosphatase phospho1 (phospho1) from Danio rerio (Zebrafish).